A 579-amino-acid polypeptide reads, in one-letter code: 3-hydroxy-3-methylglutaryl-coenzyme A reductase (579 aa).

Residues 1–22 (MEVRGGVGQGSAARHPPAPEPS) are disordered. The next 2 membrane-spanning stretches (helical) occupy residues 36–56 (LPIR…LAYL) and 80–100 (AIFG…IAFV). A linker region spans residues 101–153 (QSIVSSGDDDEDFLVGSGSSGSAAAPSRQHAQAPAPCELLGSPAAAPEKMPED). The interval 154 to 579 (DEEIVASVVA…EKTRQREVDV (426 aa)) is catalytic. E247 serves as the catalytic Charge relay system. N-linked (GlcNAc...) asparagine glycosylation is present at N311. Residues K379 and D455 each act as charge relay system in the active site. Residues 524-544 (LLATVVAGGVLAGELSLLSAL) traverse the membrane as a helical segment. The active-site Proton donor is H553. The disordered stretch occupies residues 555-579 (KYNRSSKDVSSTTATEKTRQREVDV). N-linked (GlcNAc...) asparagine glycosylation is present at N557. Positions 570–579 (EKTRQREVDV) are enriched in basic and acidic residues.

It belongs to the HMG-CoA reductase family.

Its subcellular location is the endoplasmic reticulum membrane. It carries out the reaction (R)-mevalonate + 2 NADP(+) + CoA = (3S)-3-hydroxy-3-methylglutaryl-CoA + 2 NADPH + 2 H(+). The protein operates within metabolic intermediate biosynthesis; (R)-mevalonate biosynthesis; (R)-mevalonate from acetyl-CoA: step 3/3. Its function is as follows. Catalyzes the synthesis of mevalonate. The specific precursor of all isoprenoid compounds present in plants. This chain is 3-hydroxy-3-methylglutaryl-coenzyme A reductase (HMGR), found in Zea mays (Maize).